A 135-amino-acid chain; its full sequence is ATP synthase epsilon chain, chloroplastic (135 aa).

It belongs to the ATPase epsilon chain family. F-type ATPases have 2 components, CF(1) - the catalytic core - and CF(0) - the membrane proton channel. CF(1) has five subunits: alpha(3), beta(3), gamma(1), delta(1), epsilon(1). CF(0) has three main subunits: a, b and c.

Its subcellular location is the plastid. It localises to the chloroplast thylakoid membrane. Produces ATP from ADP in the presence of a proton gradient across the membrane. The polypeptide is ATP synthase epsilon chain, chloroplastic (Marchantia polymorpha (Common liverwort)).